We begin with the raw amino-acid sequence, 252 residues long: 2-succinyl-6-hydroxy-2,4-cyclohexadiene-1-carboxylate synthase (252 aa).

This sequence belongs to the AB hydrolase superfamily. MenH family. Monomer.

The catalysed reaction is 5-enolpyruvoyl-6-hydroxy-2-succinyl-cyclohex-3-ene-1-carboxylate = (1R,6R)-6-hydroxy-2-succinyl-cyclohexa-2,4-diene-1-carboxylate + pyruvate. It functions in the pathway quinol/quinone metabolism; 1,4-dihydroxy-2-naphthoate biosynthesis; 1,4-dihydroxy-2-naphthoate from chorismate: step 3/7. Its pathway is quinol/quinone metabolism; menaquinone biosynthesis. Functionally, catalyzes a proton abstraction reaction that results in 2,5-elimination of pyruvate from 2-succinyl-5-enolpyruvyl-6-hydroxy-3-cyclohexene-1-carboxylate (SEPHCHC) and the formation of 2-succinyl-6-hydroxy-2,4-cyclohexadiene-1-carboxylate (SHCHC). In Escherichia coli O8 (strain IAI1), this protein is 2-succinyl-6-hydroxy-2,4-cyclohexadiene-1-carboxylate synthase.